We begin with the raw amino-acid sequence, 478 residues long: Lactate utilization protein B (478 aa).

4Fe-4S ferredoxin-type domains lie at 303 to 333 (GTEFQSALHCIRCAACINVCPVYRHVGGHAY) and 352 to 381 (YDDHKELPYASSLCAACTEACPVKIPLHEQ). 7 residues coordinate [4Fe-4S] cluster: Cys-312, Cys-315, Cys-318, Cys-322, Cys-365, Cys-368, and Cys-372.

Belongs to the LutB/YkgF family.

Is involved in L-lactate degradation and allows cells to grow with lactate as the sole carbon source. Has probably a role as an electron transporter during oxidation of L-lactate. The protein is Lactate utilization protein B of Oceanobacillus iheyensis (strain DSM 14371 / CIP 107618 / JCM 11309 / KCTC 3954 / HTE831).